The following is a 446-amino-acid chain: Na(+)/H(+) antiporter NhaA (446 aa).

11 helical membrane-spanning segments follow: residues 23-43 (GGMLLMGVVLLAMFLANSPWG), 73-93 (LMTFINDALMAVFFFSVGLEI), 109-129 (LLPIVAACGGMLVPVLIYYFM), 138-158 (GLAIPMATDIAFSLGVLSLFG), 167-187 (VFLTAFAVVDDIGGILVIALF), 193-213 (SVNYLIASAGILLILCGGNFF), 219-239 (WFYIFWGVIMWYLFLQSGIHA), 314-334 (MVNYIILPLFAFANAGVSLTA), 348-368 (VLAGLLAGKFAGIYFFTWLVI), 381-401 (WVNLTGICLLGGIGFTVSLFI), and 419-439 (GVILGTVLAGVLAYLVLQFAL).

It belongs to the NhaA Na(+)/H(+) (TC 2.A.33) antiporter family.

It localises to the cell inner membrane. It catalyses the reaction Na(+)(in) + 2 H(+)(out) = Na(+)(out) + 2 H(+)(in). Functionally, na(+)/H(+) antiporter that extrudes sodium in exchange for external protons. This Phocaeicola vulgatus (strain ATCC 8482 / DSM 1447 / JCM 5826 / CCUG 4940 / NBRC 14291 / NCTC 11154) (Bacteroides vulgatus) protein is Na(+)/H(+) antiporter NhaA.